An 854-amino-acid polypeptide reads, in one-letter code: Patatin-like phospholipase domain-containing protein CHGG_02900 (854 aa).

Disordered stretches follow at residues 1–29 (MAGP…YGFP), 58–138 (LSAP…PPLS), and 159–186 (QRRV…RSKD). The segment covering 96–116 (DLARRPESSGVGFHDEDRTAR) has biased composition (basic and acidic residues). Residues 119–132 (PAGAATAAAAGVAT) show a composition bias toward low complexity. A helical transmembrane segment spans residues 199–219 (WPLLGVVTCWLVGLSVVHVLA). One can recognise a PNPLA domain in the interval 387 to 578 (LCLSGGATFA…RTDIPIKALN (192 aa)). The short motif at 418–422 (GTSGG) is the GXSXG element. Ser420 (nucleophile) is an active-site residue. The active-site Proton acceptor is the Asp565. Disordered regions lie at residues 724–776 (RENR…SILS) and 791–830 (RGGI…LEFG). Residues 729–751 (GGGLGDGGVGSSGGAGGGAGGGQ) show a composition bias toward gly residues. The span at 752–761 (AEAVAGQAAG) shows a compositional bias: low complexity. The segment covering 799 to 812 (TESEDETSDLDADF) has biased composition (acidic residues).

Belongs to the PLPL family.

It localises to the membrane. Probable lipid hydrolase. This Chaetomium globosum (strain ATCC 6205 / CBS 148.51 / DSM 1962 / NBRC 6347 / NRRL 1970) (Soil fungus) protein is Patatin-like phospholipase domain-containing protein CHGG_02900.